Reading from the N-terminus, the 923-residue chain is DNA mismatch repair protein MutS (923 aa).

671–678 (GPNMAGKS) provides a ligand contact to ATP.

It belongs to the DNA mismatch repair MutS family.

In terms of biological role, this protein is involved in the repair of mismatches in DNA. It is possible that it carries out the mismatch recognition step. This protein has a weak ATPase activity. This chain is DNA mismatch repair protein MutS, found in Rhodopseudomonas palustris (strain BisB5).